We begin with the raw amino-acid sequence, 552 residues long: Dihydroxy-acid dehydratase (552 aa).

Asp78 contributes to the Mg(2+) binding site. Residue Cys119 participates in [2Fe-2S] cluster binding. The Mg(2+) site is built by Asp120 and Lys121. Position 121 is an N6-carboxylysine (Lys121). Cys191 is a binding site for [2Fe-2S] cluster. Mg(2+) is bound at residue Glu442. Residue Ser468 is the Proton acceptor of the active site.

Belongs to the IlvD/Edd family. As to quaternary structure, homodimer. [2Fe-2S] cluster serves as cofactor. Mg(2+) is required as a cofactor.

It catalyses the reaction (2R)-2,3-dihydroxy-3-methylbutanoate = 3-methyl-2-oxobutanoate + H2O. The catalysed reaction is (2R,3R)-2,3-dihydroxy-3-methylpentanoate = (S)-3-methyl-2-oxopentanoate + H2O. The protein operates within amino-acid biosynthesis; L-isoleucine biosynthesis; L-isoleucine from 2-oxobutanoate: step 3/4. It participates in amino-acid biosynthesis; L-valine biosynthesis; L-valine from pyruvate: step 3/4. Its function is as follows. Functions in the biosynthesis of branched-chain amino acids. Catalyzes the dehydration of (2R,3R)-2,3-dihydroxy-3-methylpentanoate (2,3-dihydroxy-3-methylvalerate) into 2-oxo-3-methylpentanoate (2-oxo-3-methylvalerate) and of (2R)-2,3-dihydroxy-3-methylbutanoate (2,3-dihydroxyisovalerate) into 2-oxo-3-methylbutanoate (2-oxoisovalerate), the penultimate precursor to L-isoleucine and L-valine, respectively. This chain is Dihydroxy-acid dehydratase, found in Clostridium botulinum (strain Alaska E43 / Type E3).